Consider the following 103-residue polypeptide: Histone H4.1 (103 aa).

The span at 1–14 shows a compositional bias: gly residues; the sequence is MSGRGKGGKGLGKG. Positions 1–20 are disordered; that stretch reads MSGRGKGGKGLGKGGAKRHR. Residue Lys6 is modified to N6-acetyl-N6-methyllysine; alternate. Lys6, Lys9, and Lys13 each carry N6-methyllysine; alternate. Lys13 is modified (N6-acetyl-N6-methyllysine; alternate). A DNA-binding region spans residues 17–21; that stretch reads KRHRK. Lys92 is modified (N6-glutaryllysine).

The protein belongs to the histone H4 family. The nucleosome is a histone octamer containing two molecules each of H2A, H2B, H3 and H4 assembled in one H3-H4 heterotetramer and two H2A-H2B heterodimers. The octamer wraps approximately 147 bp of DNA. Glutarylation at Lys-92 (H4K91glu) destabilizes nucleosomes by promoting dissociation of the H2A-H2B dimers from nucleosomes.

The protein localises to the nucleus. It localises to the chromosome. In terms of biological role, core component of nucleosome. Nucleosomes wrap and compact DNA into chromatin, limiting DNA accessibility to the cellular machineries which require DNA as a template. Histones thereby play a central role in transcription regulation, DNA repair, DNA replication and chromosomal stability. DNA accessibility is regulated via a complex set of post-translational modifications of histones, also called histone code, and nucleosome remodeling. This is Histone H4.1 (hhfA) from Emericella nidulans (strain FGSC A4 / ATCC 38163 / CBS 112.46 / NRRL 194 / M139) (Aspergillus nidulans).